A 137-amino-acid chain; its full sequence is Nucleoside diphosphate kinase (137 aa).

6 residues coordinate ATP: lysine 10, phenylalanine 59, arginine 87, threonine 93, arginine 104, and asparagine 114. Histidine 117 (pros-phosphohistidine intermediate) is an active-site residue.

The protein belongs to the NDK family. In terms of assembly, homotetramer. Mg(2+) is required as a cofactor.

The protein resides in the cytoplasm. The catalysed reaction is a 2'-deoxyribonucleoside 5'-diphosphate + ATP = a 2'-deoxyribonucleoside 5'-triphosphate + ADP. The enzyme catalyses a ribonucleoside 5'-diphosphate + ATP = a ribonucleoside 5'-triphosphate + ADP. Major role in the synthesis of nucleoside triphosphates other than ATP. The ATP gamma phosphate is transferred to the NDP beta phosphate via a ping-pong mechanism, using a phosphorylated active-site intermediate. The sequence is that of Nucleoside diphosphate kinase from Streptomyces griseus subsp. griseus (strain JCM 4626 / CBS 651.72 / NBRC 13350 / KCC S-0626 / ISP 5235).